The primary structure comprises 339 residues: Ubiquitin carboxyl-terminal hydrolase 50 (339 aa).

The USP domain occupies 44-339; the sequence is TGLWNLGNTC…AFCKNSVTQA (296 aa). C53 serves as the catalytic Nucleophile. The Proton acceptor role is filled by H327.

Belongs to the peptidase C19 family. As to expression, weakly expressed in a few tissues.

Its subcellular location is the cytoplasm. It is found in the cytoskeleton. The protein resides in the microtubule organizing center. It localises to the centrosome. The protein localises to the nucleus. It carries out the reaction Thiol-dependent hydrolysis of ester, thioester, amide, peptide and isopeptide bonds formed by the C-terminal Gly of ubiquitin (a 76-residue protein attached to proteins as an intracellular targeting signal).. Its function is as follows. Deubiquitinating enzyme that removes conjugated ubiquitin from specific proteins to regulate different cellular processes. Regulates the inflammasome signaling pathway by deubiquitinating 'Lys-63'-linked polyubiquitination of the PYCARD/ASC adapter protein. Regulates the ubiquitination and stability of the ACE2 protein. Acts as a negative regulator of the G2/M checkpoint pathway, by preventing serine/threonine kinase WEE1 degradation, thereby repressing entry into mitosis following activation of the G2/M DNA damage checkpoint. The protein is Ubiquitin carboxyl-terminal hydrolase 50 of Homo sapiens (Human).